A 200-amino-acid chain; its full sequence is Probable GTP-binding protein EngB (200 aa).

One can recognise an EngB-type G domain in the interval K30 to K199. GTP-binding positions include G38–S45, G64–L68, D82–G85, T149–D152, and V178–A180. 2 residues coordinate Mg(2+): S45 and T66.

This sequence belongs to the TRAFAC class TrmE-Era-EngA-EngB-Septin-like GTPase superfamily. EngB GTPase family. Mg(2+) serves as cofactor.

In terms of biological role, necessary for normal cell division and for the maintenance of normal septation. The protein is Probable GTP-binding protein EngB of Bdellovibrio bacteriovorus (strain ATCC 15356 / DSM 50701 / NCIMB 9529 / HD100).